Here is a 339-residue protein sequence, read N- to C-terminus: Terpene synthase 7 (339 aa).

The short motif at 79-84 is the DDxx(x)D/E motif element; sequence DDFLES. The short motif at 219 to 227 is the NDxxSxxxD/E motif element; it reads NDCASYAKE.

Belongs to the terpene synthase family.

It catalyses the reaction (2E,6E)-farnesyl diphosphate = (-)-beta-barbatene + diphosphate. Terpene synthase that converts its substrate farnesyl diphosphate (FPP) into the sesquiterpene beta-barbatene. In Dictyostelium discoideum (Social amoeba), this protein is Terpene synthase 7.